Here is a 358-residue protein sequence, read N- to C-terminus: MFKMVSSPHTHSGKLTARIMLWVILAMMPAFFTQIYYFGFGVLLQSALAIGTAIIAEFIAIKLRGKKPLNYLSDFSVALTALILAMAIPPYAPYWVIIIGTLCAVLLGKQVYGGLGQNPFNPAMIGYVILLISFPLQMTTWMPPINLLQEPPTFSDAFSLIFSGLTTDGFTLSQLTHNIDGITQATPLDSAKIFYKSHNQLSDFYELIKLPIFMGNGTDFAQGWWQINVAFLAGGIFLILKRIIHWQIPVAMLVTFFCLATATAFTGFTHLSAISQLVSGAMMFGAFFIATDPVTASITPRGKIIFGALVGLFVYLIRYHGNYPDGVAFAILLSNICVPLIDHYTRPRVSGYPTKGRK.

4 helical membrane passes run 19–39, 41–61, 79–99, and 125–145; these read IMLW…YYFG, GVLL…FIAI, LTAL…VIII, and IGYV…MPPI. The residue at position 186 (threonine 186) is an FMN phosphoryl threonine. Transmembrane regions (helical) follow at residues 220 to 240, 248 to 268, 271 to 291, 297 to 317, and 321 to 341; these read FAQG…FLIL, IPVA…FTGF, LSAI…FIAT, SITP…VYLI, and GNYP…VPLI.

This sequence belongs to the NqrB/RnfD family. As to quaternary structure, the complex is composed of six subunits: RnfA, RnfB, RnfC, RnfD, RnfE and RnfG. Requires FMN as cofactor.

The protein resides in the cell inner membrane. Its function is as follows. Part of a membrane-bound complex that couples electron transfer with translocation of ions across the membrane. This Haemophilus influenzae (strain PittEE) protein is Ion-translocating oxidoreductase complex subunit D.